Consider the following 384-residue polypeptide: Urea transporter 1 (384 aa).

The tract at residues 1 to 23 (MDDNPTAVKLDQGGNQAPQGQGR) is disordered. 5 helical membrane passes run 61-81 (ISQV…VGLL), 85-105 (PWCA…ALLL), 111-131 (AITA…MAIY), 138-158 (FWWL…FSSA), and 169-189 (PVFT…TGHF). Asn-206 is a glycosylation site (N-linked (GlcNAc...) asparagine). 3 helical membrane-spanning segments follow: residues 237–257 (GGIF…HAAI), 279–299 (GLWG…FMAL), and 327–347 (VVGL…FLLL).

It belongs to the urea transporter family. In terms of assembly, homotrimer; each subunit contains a pore through which urea permeates. Identified in a complex with STOM.

The protein resides in the cell membrane. The protein localises to the basolateral cell membrane. The catalysed reaction is urea(in) = urea(out). Functionally, mediates the transport of urea driven by a concentration gradient across the cell membranes of erythrocytes and the renal inner medullary collecting duct which is critical to the urinary concentrating mechanism. Facilitates water transport in erythrocytes. This Ovis aries (Sheep) protein is Urea transporter 1 (SLC14A1).